The sequence spans 565 residues: METTTKKARSLYIPYAGPVLLEFPLLNKGSAFSVEERRNFNLSGLLPEVVESIEEQAERAWLQYQGFKTEIDKHIYLRNIQDTNETLFYRLVQNHLEEMMPVIYTPTVGAACERFSEIYRRARGVFISYPNRHNMDDILQNVPNHNIKVIVVTDGERILGLGDQGIGGMGIPIGKLSLYTACGGISPAYTLPVVLDVGTNNQQLLNDPLYMGWRHPRITDDEYYAFVDEFIQAVKQRWPDILLQFEDFAQKNAMPLLTRYRDEICSFNDDIQGTAAVTVGTLIAASRAAGSQLSEQKIVFLGAGSAGCGIAEQIIAQTQREGLSEDAARQNVFMVDRFGLLTDRMPNLLPFQAKLVQKCDNLQHWDTENDVLSLLDVVRNVKPDILIGVSGQTGLFTEEIIREMHKHCPRPIVMPLSNPTSRVEATPQDIIVWTEGNALVATGSPFSPVIWKDKVYPIAQCNNAYIFPGIGLGVIASGASRITDEMLMSASETLAKHSPLVNNGEGLVLPALKDIQVVSRAIAFAVGKMAQQQGVAVKTSAEALQQAIDDNFWKPEYRDYRRTSI.

Tyr-104 functions as the Proton donor in the catalytic mechanism. NAD(+) is bound at residue Arg-157. The Proton acceptor role is filled by Lys-175. A divalent metal cation-binding residues include Glu-246, Asp-247, and Asp-270. 2 residues coordinate NAD(+): Asp-270 and Asn-418.

The protein belongs to the malic enzymes family. In terms of assembly, homotetramer. Mg(2+) is required as a cofactor. Requires Mn(2+) as cofactor.

It carries out the reaction (S)-malate + NAD(+) = pyruvate + CO2 + NADH. The enzyme catalyses oxaloacetate + H(+) = pyruvate + CO2. The chain is NAD-dependent malic enzyme from Salmonella choleraesuis (strain SC-B67).